The chain runs to 708 residues: MANEEDDPVVQEIDVYLAKSLAEKLYLFQYPVRPASMTYDDIPHLSAKIKPKQQKVELEMAIDTLNPNYCRSKGEQIALNVDGACADETSTYSSKLMDKQTFCSSQTTSNTSRYAAALYRQGELHLTPLHGILQLRPSFSYLDKADAKHREREAANEAGDSSQDEAEDDVKQITVRFSRPESEQARQRRVQSYEFLQKKHAEEPWVHLHYYGLRDSRSEHERQYLLCPGSSGVENTELVKSPSEYLMMLMPPSQEEEKDKPVAPSNVLSMAQLRTLPLADQIKILMKNVKVMPFANLMSLLGPSIDSVAVLRGIQKVAMLVQGNWVVKSDILYPKDSSSPHSGVPAEVLCRGRDFVMWKFTQSRWVVRKEVATVTKLCAEDVKDFLEHMAVVRINKGWEFILPYDGEFIKKHPDVVQRQHMLWTGIQAKLEKVYNLVKETMPKKPDAQSGPAGLVCGDQRIQVAKTKAQQNHALLERELQRRKEQLRVPAVPPGVRIKEEPVSEEGEEDEEQEAEEEPMDTSPSGLHSKLANGLPLGRAAGTDSFNGHPPQGCASTPVARELKAFVEATFQRQFVLTLSELKRLFNLHLASLPPGHTLFSGISDRMLQDTVLAAGCKQILVPFPPQTAASPDEQKVFALWESGDMSDQHRQVLLEIFSKNYRVRRNMIQSRLTQECGEDLSKQEVDKVLKDCCVSYGGMWYLKGTVQS.

Over residues 146 to 155 (DAKHREREAA) the composition is skewed to basic and acidic residues. The segment at 146 to 170 (DAKHREREAANEAGDSSQDEAEDDV) is disordered. Phosphoserine occurs at positions 161 and 162. Residue lysine 171 forms a Glycyl lysine isopeptide (Lys-Gly) (interchain with G-Cter in SUMO2) linkage. The residue at position 192 (serine 192) is a Phosphoserine. Tyrosine 224 is subject to Phosphotyrosine. Lysine 432 participates in a covalent cross-link: Glycyl lysine isopeptide (Lys-Gly) (interchain with G-Cter in SUMO2). The segment at 485 to 552 (QLRVPAVPPG…DSFNGHPPQG (68 aa)) is disordered. Residue lysine 498 forms a Glycyl lysine isopeptide (Lys-Gly) (interchain with G-Cter in SUMO1); alternate linkage. Lysine 498 participates in a covalent cross-link: Glycyl lysine isopeptide (Lys-Gly) (interchain with G-Cter in SUMO2); alternate. Residues 502–519 (VSEEGEEDEEQEAEEEPM) show a composition bias toward acidic residues. Serine 503 and serine 522 each carry phosphoserine. The tract at residues 556 to 708 (TPVARELKAF…MWYLKGTVQS (153 aa)) is required for Pol III complex stability. Lysine 659 is covalently cross-linked (Glycyl lysine isopeptide (Lys-Gly) (interchain with G-Cter in SUMO2)).

As to quaternary structure, component of the RNA polymerase III complex consisting of at least 17 subunits: a ten-subunit horseshoe-shaped catalytic core composed of POLR3A/RPC1, POLR3B/RPC2, POLR1C/RPAC1, POLR1D/RPAC2, POLR3K/RPC10, POLR2E/RPABC1, POLR2F/RPABC2, POLR2H/RPABC3, POLR2K/RPABC4 and POLR2L/RPABC5; the stalk composed of two subunits POLR3H/RPC8 and CRCP/RPC9, forming a structural mobile part that protrudes out of the core and functions primarily in transcription initiation; and additional subunits homologous to general transcription factors of the RNA polymerase II machinery, POLR3D/RPC4-POLR3E/RPC5 heterodimer and POLR3/CRPC3-POLR3F/RPC6-POLR3G/RPC7 heterotrimer.

Its subcellular location is the nucleus. In terms of biological role, DNA-dependent RNA polymerase catalyzes the transcription of DNA into RNA using the four ribonucleoside triphosphates as substrates. Specific peripheric component of RNA polymerase III (Pol III) which synthesizes small non-coding RNAs including 5S rRNA, snRNAs, tRNAs and miRNAs from at least 500 distinct genomic loci. Assembles with POLR3D/RPC4 forming a subcomplex that binds the Pol III core. Enables recruitment of Pol III at transcription initiation site and drives transcription initiation from both type 2 and type 3 DNA promoters. Required for efficient transcription termination and reinitiation. Plays a key role in sensing and limiting infection by intracellular bacteria and DNA viruses. Acts as a nuclear and cytosolic DNA sensor involved in innate immune response. Can sense non-self dsDNA that serves as template for transcription into dsRNA. The non-self RNA polymerase III transcripts, such as Epstein-Barr virus-encoded RNAs (EBERs) induce type I interferon and NF-kappa-B through the RIG-I pathway. This chain is DNA-directed RNA polymerase III subunit RPC5, found in Homo sapiens (Human).